The sequence spans 362 residues: Peptide chain release factor 1 (362 aa).

Position 237 is an N5-methylglutamine (Gln-237).

This sequence belongs to the prokaryotic/mitochondrial release factor family. Methylated by PrmC. Methylation increases the termination efficiency of RF1.

It is found in the cytoplasm. Peptide chain release factor 1 directs the termination of translation in response to the peptide chain termination codons UAG and UAA. The polypeptide is Peptide chain release factor 1 (prfA) (Aquifex aeolicus (strain VF5)).